We begin with the raw amino-acid sequence, 201 residues long: Large ribosomal subunit protein uL4 (201 aa).

Positions 44-68 (RAQKSRAEVSGSGRKPWRQKGTGRA) are disordered.

Belongs to the universal ribosomal protein uL4 family. As to quaternary structure, part of the 50S ribosomal subunit.

Functionally, one of the primary rRNA binding proteins, this protein initially binds near the 5'-end of the 23S rRNA. It is important during the early stages of 50S assembly. It makes multiple contacts with different domains of the 23S rRNA in the assembled 50S subunit and ribosome. Its function is as follows. Forms part of the polypeptide exit tunnel. In Buchnera aphidicola subsp. Acyrthosiphon pisum (strain APS) (Acyrthosiphon pisum symbiotic bacterium), this protein is Large ribosomal subunit protein uL4.